A 507-amino-acid chain; its full sequence is ATP synthase subunit alpha, plastid (507 aa).

170 to 177 serves as a coordination point for ATP; it reads GDRQTGKT.

This sequence belongs to the ATPase alpha/beta chains family. As to quaternary structure, F-type ATPases have 2 components, CF(1) - the catalytic core - and CF(0) - the membrane proton channel. CF(1) has five subunits: alpha(3), beta(3), gamma(1), delta(1), epsilon(1). CF(0) has four main subunits: a, b, b' and c.

The protein localises to the plastid membrane. The enzyme catalyses ATP + H2O + 4 H(+)(in) = ADP + phosphate + 5 H(+)(out). In terms of biological role, produces ATP from ADP in the presence of a proton gradient across the membrane. The alpha chain is a regulatory subunit. The sequence is that of ATP synthase subunit alpha, plastid from Aneura mirabilis (Parasitic liverwort).